The primary structure comprises 160 residues: ATP synthase subunit b (160 aa).

Residues 13–33 form a helical membrane-spanning segment; the sequence is VNLAIVIGVLVWFLRGFLGGI.

This sequence belongs to the ATPase B chain family. F-type ATPases have 2 components, F(1) - the catalytic core - and F(0) - the membrane proton channel. F(1) has five subunits: alpha(3), beta(3), gamma(1), delta(1), epsilon(1). F(0) has four main subunits: a(1), b(1), b'(1) and c(10-14). The alpha and beta chains form an alternating ring which encloses part of the gamma chain. F(1) is attached to F(0) by a central stalk formed by the gamma and epsilon chains, while a peripheral stalk is formed by the delta, b and b' chains.

Its subcellular location is the cellular thylakoid membrane. In terms of biological role, f(1)F(0) ATP synthase produces ATP from ADP in the presence of a proton or sodium gradient. F-type ATPases consist of two structural domains, F(1) containing the extramembraneous catalytic core and F(0) containing the membrane proton channel, linked together by a central stalk and a peripheral stalk. During catalysis, ATP synthesis in the catalytic domain of F(1) is coupled via a rotary mechanism of the central stalk subunits to proton translocation. Its function is as follows. Component of the F(0) channel, it forms part of the peripheral stalk, linking F(1) to F(0). This Parasynechococcus marenigrum (strain WH8102) protein is ATP synthase subunit b.